The following is a 595-amino-acid chain: Chaperone protein HscA homolog (595 aa).

It belongs to the heat shock protein 70 family.

In terms of biological role, chaperone involved in the maturation of iron-sulfur cluster-containing proteins. Has a low intrinsic ATPase activity which is markedly stimulated by HscB. The polypeptide is Chaperone protein HscA homolog (Rickettsia peacockii (strain Rustic)).